Here is a 701-residue protein sequence, read N- to C-terminus: E3 ubiquitin-protein ligase RNF19B (701 aa).

The disordered stretch occupies residues 1 to 97 (MGSEKDSESP…PAEPLSTSQA (97 aa)). The tract at residues 1 to 304 (MGSEKDSESP…VCGCEFCWLC (304 aa)) is required for ubiquitin ligase activity and for protection against staurosporin-induced cell death. Residues 57-72 (QQLHQQQQIQQQQLLQ) are compositionally biased toward low complexity. Residues 103-323 (ELLECPLCLV…LSPSGCTFWG (221 aa)) form a TRIAD supradomain region. Zn(2+) contacts are provided by C107, C110, C130, C133, C194, C199, C216, C221, C226, C229, H234, C239, C273, and C276. The segment at 107–156 (CPLCLVRQPAEQLPELQGCSHRSCLCCLRQYLRIEITESRVQLSCPECAE) adopts an RING-type 1 zinc-finger fold. An IBR-type zinc finger spans residues 174–239 (EKYEEFLLRR…KQAWHPNQTC (66 aa)). The RING-type 2; atypical zinc-finger motif lies at 273-304 (CPRCGAYIIKMNDGSCNHMTCAVCGCEFCWLC). The active site involves C288. Residues C293, C296, C301, C304, H312, and C319 each coordinate Zn(2+). A run of 2 helical transmembrane segments spans residues 340-360 (LIGAPVGITLIAGIAVPAMVI) and 396-416 (IITAPVIAAVSVGIGVPIMLA). Disordered regions lie at residues 472-495 (LEGAASGLSTTSPSEGLSVAPGGL) and 658-677 (AELTSDDCDSPHPKSCHGAP).

It belongs to the RBR family. RNF19 subfamily. As to quaternary structure, interacts with UBE2L3, UBE2L6 and UCKL1.

The protein localises to the cytoplasmic granule membrane. Its subcellular location is the endoplasmic reticulum membrane. The catalysed reaction is [E2 ubiquitin-conjugating enzyme]-S-ubiquitinyl-L-cysteine + [acceptor protein]-L-lysine = [E2 ubiquitin-conjugating enzyme]-L-cysteine + [acceptor protein]-N(6)-ubiquitinyl-L-lysine.. The protein operates within protein modification; protein ubiquitination. E3 ubiquitin-protein ligase which accepts ubiquitin from E2 ubiquitin-conjugating enzymes UBE2L3 and UBE2L6 in the form of a thioester and then directly transfers the ubiquitin to targeted substrates, such as UCKL1. Involved in the cytolytic activity of natural killer cells and cytotoxic T-cells. Protects against staurosporin-induced cell death. In Danio rerio (Zebrafish), this protein is E3 ubiquitin-protein ligase RNF19B (rnf19b).